A 171-amino-acid polypeptide reads, in one-letter code: Cytochrome c oxidase subunit 5b-2, mitochondrial (171 aa).

The transit peptide at 1 to 54 (MWRRIVSSHLKSISAVGSCAAPSCRHAVVESTHLSLSTRASSIPAYSSIFSRLI) directs the protein to the mitochondrion. 3 residues coordinate Zn(2+): C121, C145, and C148.

It belongs to the cytochrome c oxidase subunit 5B (TC 3.D.4.11) family.

The protein resides in the mitochondrion inner membrane. Functionally, this protein is one of the nuclear-coded polypeptide chains of cytochrome c oxidase, the terminal oxidase in mitochondrial electron transport. This Arabidopsis thaliana (Mouse-ear cress) protein is Cytochrome c oxidase subunit 5b-2, mitochondrial (COX5B-2).